Consider the following 213-residue polypeptide: Eukaryotic translation initiation factor 4E (213 aa).

Phosphoserine; by CK2 is present on residues S2 and S15. T22 is modified (phosphothreonine). 2 positions are modified to phosphoserine: S28 and S30. K114 participates in a covalent cross-link: Glycyl lysine isopeptide (Lys-Gly) (interchain with G-Cter in ubiquitin).

This sequence belongs to the eukaryotic initiation factor 4E family. In terms of assembly, component of the eIF4F complex, which composition varies with external and internal environmental conditions. It is composed of at least eIF4A (TIF1/TIF2), eIF4E (TIF45) and eIF4G (TIF4631 or TIF4632). Interacts with PAT1 in a RNA-dependent manner. eIF4E is also known to interact with other partners.

It is found in the cytoplasm. The protein resides in the nucleus. Functionally, recognizes and binds the 7-methylguanosine (m7G)-containing mRNA cap during an early step in the initiation of protein synthesis and facilitates ribosome binding by inducing the unwinding of the mRNAs secondary structures. This chain is Eukaryotic translation initiation factor 4E (CDC33), found in Saccharomyces cerevisiae (strain ATCC 204508 / S288c) (Baker's yeast).